The sequence spans 128 residues: Small ribosomal subunit protein eS8 (128 aa).

Belongs to the eukaryotic ribosomal protein eS8 family. Part of the 30S ribosomal subunit.

This Methanococcus maripaludis (strain C5 / ATCC BAA-1333) protein is Small ribosomal subunit protein eS8.